An 849-amino-acid polypeptide reads, in one-letter code: Thrombospondin type-1 domain-containing protein 1 (849 aa).

Residues 1 to 24 (MKQTLKDFSNLLLVVLCDYVLGEA) form the signal peptide. The Extracellular segment spans residues 25–413 (EHLVLGEPGH…QPQAPVKSNN (389 aa)). 7 N-linked (GlcNAc...) asparagine glycosylation sites follow: N39, N50, N55, N66, N77, N106, and N303. The region spanning 340–393 (IETWGLWQPWSQCSASCGDGVRERRRVCLTSSPSRPGCPGMSSETSPCSLEDCA) is the TSP type-1 domain. Disulfide bonds link C352-C387, C356-C392, and C367-C377. A helical membrane pass occupies residues 414-434 (VVTVTGISLCLFIIVATVLIT). Topologically, residues 435 to 849 (LWRKLGRAPK…STLSVEKLVI (415 aa)) are cytoplasmic. The residue at position 463 (S463) is a Phosphoserine. 3 disordered regions span residues 472–516 (SEPR…SESF), 595–799 (KSPF…KCQS), and 828–849 (GYFGSNEEDETTSTLSVEKLVI). A compositionally biased stretch (low complexity) spans 479 to 493 (SDAGDGPAGSPGDPG). Positions 636-651 (SQVRSHSRGSHFRRTA) are enriched in basic residues. The segment covering 652 to 666 (SFHEARQARPFRERS) has biased composition (basic and acidic residues). The segment covering 720 to 732 (SPLPKPHSLGPPP) has biased composition (pro residues).

As to quaternary structure, part of a complex composed of THSD1, PTK2/FAK1, TLN1 and VCL. Interacts with TLN1.

It is found in the endosome membrane. The protein resides in the cell junction. Its subcellular location is the focal adhesion. In terms of biological role, is a positive regulator of nascent focal adhesion assembly, involved in the modulation of endothelial cell attachment to the extracellular matrix. This is Thrombospondin type-1 domain-containing protein 1 (THSD1) from Bos taurus (Bovine).